Here is a 397-residue protein sequence, read N- to C-terminus: MIIKPRVRGFICVTTHPAGCAASVREQIAYVARRGPIERGPKKVLVIGASTGYGLAARIAAAFGAGAATLGVFFERAPADAKPGTAGWYNSAAFHDEAAARGLQATSINGDAFSDEIKHKTIDAIRRDLGQVDLVVYSVAAPRRTHPKTGVTHQSTLKPIGHAVRLRGIDTDNEAIKETLLQPATPDEIADTVAVMGGEDWRMWIDALDAAGVLADGAKTTAFTYLGEQVTHDIYWNGSIGEAKKDLDRTVLALRGKLAARGGDARVSVLKAVVTQASSAIPMMPLYLSLLFKVMKARGTHEGCIEQVDGLLRDSLYGAQPHVDAEGRLRADRLELDPAVQTRVLELWDQVTDDNLYTLTDFAGYKAEFLRLFGFGIDGVDYDAPVEPNVRIPNLIE.

Residues 48-53 (GASTGY), 74-75 (FE), 111-112 (DA), and 139-140 (VA) each bind NAD(+). Tyrosine 225 is a substrate binding site. The active-site Proton donor is tyrosine 235. Residues lysine 244 and 273 to 275 (VVT) each bind NAD(+).

It belongs to the TER reductase family. Monomer.

The catalysed reaction is a 2,3-saturated acyl-[ACP] + NAD(+) = a (2E)-enoyl-[ACP] + NADH + H(+). Its pathway is lipid metabolism; fatty acid biosynthesis. In terms of biological role, involved in the final reduction of the elongation cycle of fatty acid synthesis (FAS II). Catalyzes the reduction of a carbon-carbon double bond in an enoyl moiety that is covalently linked to an acyl carrier protein (ACP). The chain is Enoyl-[acyl-carrier-protein] reductase [NADH] from Burkholderia pseudomallei (strain 668).